The sequence spans 113 residues: Large ribosomal subunit protein uL22 (113 aa).

The protein belongs to the universal ribosomal protein uL22 family. In terms of assembly, part of the 50S ribosomal subunit.

This protein binds specifically to 23S rRNA; its binding is stimulated by other ribosomal proteins, e.g. L4, L17, and L20. It is important during the early stages of 50S assembly. It makes multiple contacts with different domains of the 23S rRNA in the assembled 50S subunit and ribosome. Its function is as follows. The globular domain of the protein is located near the polypeptide exit tunnel on the outside of the subunit, while an extended beta-hairpin is found that lines the wall of the exit tunnel in the center of the 70S ribosome. The protein is Large ribosomal subunit protein uL22 of Geobacillus thermodenitrificans (strain NG80-2).